The following is a 387-amino-acid chain: Mannitol-1-phosphate 5-dehydrogenase (387 aa).

3-14 contacts NAD(+); that stretch reads ALHFGAGNIGRG.

The protein belongs to the mannitol dehydrogenase family.

The enzyme catalyses D-mannitol 1-phosphate + NAD(+) = beta-D-fructose 6-phosphate + NADH + H(+). The chain is Mannitol-1-phosphate 5-dehydrogenase from Yersinia pestis bv. Antiqua (strain Antiqua).